Here is an 89-residue protein sequence, read N- to C-terminus: Small ribosomal subunit protein uS14A (89 aa).

This sequence belongs to the universal ribosomal protein uS14 family. In terms of assembly, part of the 30S ribosomal subunit. Contacts proteins S3 and S10.

Its function is as follows. Binds 16S rRNA, required for the assembly of 30S particles and may also be responsible for determining the conformation of the 16S rRNA at the A site. The sequence is that of Small ribosomal subunit protein uS14A from Staphylococcus epidermidis (strain ATCC 35984 / DSM 28319 / BCRC 17069 / CCUG 31568 / BM 3577 / RP62A).